The chain runs to 581 residues: MYAASILILHLTWAVATIAANGAGHNGPVASGAGPNGLQCQPIAVSACQGLGYNMTALPNLAGHTNQLEAELQIAKLVPLIESGCSRRARFLLCSSLFPLCTPDVPRPVAACKLLCETVRGECMENAPPELMELWPSFLNCDGLPQPEKHELCMQIPQEVAVPGGSPSGPPTTGSPGVEDHPQTYRFWKSGASPTSDLAGVLCPQNFSGSPFNPEECVPQCQRDAFHTSSQKKTSETLILGLSAVCFVLTLFALVTFWAEPTRFGYPERPVLFLCLCYNLFSVCYLERIVFHNQARMHDVELQGRLMRPGCLLTPPCLASYITTSYLSLCAASWWLIFALCFYLSSHKKWSSEALEKRSGLFHVLAWVPPLAPPIAALLLEKVRPSELTGMCYAPGFVELPALVLLLLGLYFTLRASRSLLSLQQQLQPTLAHHRFGQIRKRFVLFSLLYFAPTTAGVVAALCERYADSVPSCSTPDDCLSPTPLSAWPALVRIFFQLVGGTLTGLWVWSRKTCESYRNRLGASGTPTSSLMNQSKAAGALPKKHLYTSGKSMLPTGGITPLYAGISFHNVPVYNPNQSRV.

Positions 1-19 are cleaved as a signal peptide; it reads MYAASILILHLTWAVATIA. The Extracellular portion of the chain corresponds to 20 to 237; the sequence is ANGAGHNGPV…TSSQKKTSET (218 aa). The region spanning 35 to 156 is the FZ domain; it reads PNGLQCQPIA…PEKHELCMQI (122 aa). 5 disulfides stabilise this stretch: C40/C101, C48/C94, C85/C123, C112/C153, and C116/C141. A glycan (N-linked (GlcNAc...) asparagine) is linked at N54. N206 is a glycosylation site (N-linked (GlcNAc...) asparagine). A helical transmembrane segment spans residues 238-258; that stretch reads LILGLSAVCFVLTLFALVTFW. At 259–270 the chain is on the cytoplasmic side; that stretch reads AEPTRFGYPERP. Residues 271 to 291 traverse the membrane as a helical segment; that stretch reads VLFLCLCYNLFSVCYLERIVF. At 292 to 321 the chain is on the extracellular side; that stretch reads HNQARMHDVELQGRLMRPGCLLTPPCLASY. Residues 322 to 342 form a helical membrane-spanning segment; that stretch reads ITTSYLSLCAASWWLIFALCF. The Cytoplasmic portion of the chain corresponds to 343–359; the sequence is YLSSHKKWSSEALEKRS. A helical transmembrane segment spans residues 360–380; it reads GLFHVLAWVPPLAPPIAALLL. Topologically, residues 381–393 are extracellular; the sequence is EKVRPSELTGMCY. Residues 394 to 414 form a helical membrane-spanning segment; that stretch reads APGFVELPALVLLLLGLYFTL. The Cytoplasmic segment spans residues 415 to 442; it reads RASRSLLSLQQQLQPTLAHHRFGQIRKR. Residues 443–463 traverse the membrane as a helical segment; it reads FVLFSLLYFAPTTAGVVAALC. The Extracellular portion of the chain corresponds to 464-488; that stretch reads ERYADSVPSCSTPDDCLSPTPLSAW. A helical transmembrane segment spans residues 489–509; sequence PALVRIFFQLVGGTLTGLWVW. Residues 510–581 lie on the Cytoplasmic side of the membrane; the sequence is SRKTCESYRN…PVYNPNQSRV (72 aa). Residues 579–581 carry the PDZ-binding motif; that stretch reads SRV.

This sequence belongs to the G-protein coupled receptor Fz/Smo family. Wing, leg and eye imaginal disks. In embryos, expressed is seen in brain, proventriculus, Malpighian tubules, anal plate and visceral mesoderm of parasegment 8.

It localises to the membrane. Its function is as follows. Receptor for Wnt proteins. Most of frizzled receptors are coupled to the beta-catenin canonical signaling pathway, which leads to the activation of disheveled proteins, inhibition of GSK-3 kinase, nuclear accumulation of beta-catenin and activation of Wnt target genes. A second signaling pathway involving PKC and calcium fluxes has been seen for some family members, but it is not yet clear if it represents a distinct pathway or if it can be integrated in the canonical pathway, as PKC seems to be required for Wnt-mediated inactivation of GSK-3 kinase. Both pathways seem to involve interactions with G-proteins. Required to coordinate the cytoskeletons of epidermal cells to produce a parallel array of cuticular hairs and bristles. In Drosophila melanogaster (Fruit fly), this protein is Frizzled-3 (fz3).